The following is a 101-amino-acid chain: Growth-regulated alpha protein (101 aa).

The first 28 residues, 1–28, serve as a signal peptide directing secretion; the sequence is MAPATRSLLRAPLLLLLLLLATSRLATG. Intrachain disulfides connect Cys-37/Cys-63 and Cys-39/Cys-79.

Belongs to the intercrine alpha (chemokine CxC) family.

The protein localises to the secreted. Its function is as follows. Has chemotactic activity for neutrophils. The protein is Growth-regulated alpha protein (CXCL1) of Cricetulus griseus (Chinese hamster).